Reading from the N-terminus, the 621-residue chain is Lethal(3)malignant brain tumor-like protein 4 (621 aa).

The interval 1-48 (MRQPNRKRKLSLESTERMNQDRCTGQTEEEKKPGEVTTPSKRESSVTT) is disordered. 2 stretches are compositionally biased toward basic and acidic residues: residues 10 to 20 (LSLESTERMNQ) and 28 to 44 (EEEKKPGEVTTPSKRES). 3 MBT repeats span residues 52–152 (WSWE…LHIP), 160–260 (FVWM…LVAP), and 269–364 (FSWT…LEVP). The segment at 370-414 (VKILPGQPACPTPGCRGIGHIRGPRYAGHHSAFGCPYSDVNLKRE) adopts a CCHHC-type zinc-finger fold. Zn(2+) is bound by residues cysteine 379, cysteine 384, histidine 398, and cysteine 404. An SAM domain is found at 543–607 (WTVDEVAEFV…YNSILMFRNS (65 aa)).

It is found in the nucleus. Its function is as follows. Putative Polycomb group (PcG) protein. PcG proteins maintain the transcriptionally repressive state of genes, probably via a modification of chromatin, rendering it heritably changed in its expressibility. This chain is Lethal(3)malignant brain tumor-like protein 4 (L3mbtl4), found in Mus musculus (Mouse).